A 258-amino-acid polypeptide reads, in one-letter code: Imidazole glycerol phosphate synthase subunit HisF (258 aa).

Active-site residues include D11 and D130.

It belongs to the HisA/HisF family. As to quaternary structure, heterodimer of HisH and HisF.

It localises to the cytoplasm. It catalyses the reaction 5-[(5-phospho-1-deoxy-D-ribulos-1-ylimino)methylamino]-1-(5-phospho-beta-D-ribosyl)imidazole-4-carboxamide + L-glutamine = D-erythro-1-(imidazol-4-yl)glycerol 3-phosphate + 5-amino-1-(5-phospho-beta-D-ribosyl)imidazole-4-carboxamide + L-glutamate + H(+). It participates in amino-acid biosynthesis; L-histidine biosynthesis; L-histidine from 5-phospho-alpha-D-ribose 1-diphosphate: step 5/9. Its function is as follows. IGPS catalyzes the conversion of PRFAR and glutamine to IGP, AICAR and glutamate. The HisF subunit catalyzes the cyclization activity that produces IGP and AICAR from PRFAR using the ammonia provided by the HisH subunit. This is Imidazole glycerol phosphate synthase subunit HisF from Rhodopseudomonas palustris (strain BisB18).